Here is a 242-residue protein sequence, read N- to C-terminus: DNA repair protein RecO (242 aa).

The protein belongs to the RecO family.

Functionally, involved in DNA repair and RecF pathway recombination. This chain is DNA repair protein RecO, found in Methylococcus capsulatus (strain ATCC 33009 / NCIMB 11132 / Bath).